Here is a 208-residue protein sequence, read N- to C-terminus: MVNNRVQTLLNQLRAQGIKDERVLEAISRVPREKFVDEAFEHKAWENVALPIGSGQTISQPYMVARMTELLTLTPASRVLEIGTGSGYQTAILAHLVHHVCSVERIKSLQWHARRRLKQLDLHNISTRHGDGWQGWQARAPFDAIIVTAAPPEIPTALLSQLDEGGILVLPVGDEQQVLKRVRRRGSEFIIDTVEAVRFVPLVKGELA.

The active site involves Ser59.

It belongs to the methyltransferase superfamily. L-isoaspartyl/D-aspartyl protein methyltransferase family.

It localises to the cytoplasm. It carries out the reaction [protein]-L-isoaspartate + S-adenosyl-L-methionine = [protein]-L-isoaspartate alpha-methyl ester + S-adenosyl-L-homocysteine. Its function is as follows. Catalyzes the methyl esterification of L-isoaspartyl residues in peptides and proteins that result from spontaneous decomposition of normal L-aspartyl and L-asparaginyl residues. It plays a role in the repair and/or degradation of damaged proteins. The protein is Protein-L-isoaspartate O-methyltransferase of Cronobacter sakazakii (strain ATCC BAA-894) (Enterobacter sakazakii).